The sequence spans 417 residues: NADH-quinone oxidoreductase subunit D (417 aa).

This sequence belongs to the complex I 49 kDa subunit family. As to quaternary structure, NDH-1 is composed of 14 different subunits. Subunits NuoB, C, D, E, F, and G constitute the peripheral sector of the complex.

The protein localises to the cell inner membrane. It carries out the reaction a quinone + NADH + 5 H(+)(in) = a quinol + NAD(+) + 4 H(+)(out). NDH-1 shuttles electrons from NADH, via FMN and iron-sulfur (Fe-S) centers, to quinones in the respiratory chain. The immediate electron acceptor for the enzyme in this species is believed to be ubiquinone. Couples the redox reaction to proton translocation (for every two electrons transferred, four hydrogen ions are translocated across the cytoplasmic membrane), and thus conserves the redox energy in a proton gradient. The sequence is that of NADH-quinone oxidoreductase subunit D from Albidiferax ferrireducens (strain ATCC BAA-621 / DSM 15236 / T118) (Rhodoferax ferrireducens).